The following is a 211-amino-acid chain: Histidine biosynthesis bifunctional protein HisIE (211 aa).

The interval 1–122 (MSVKAAEVSS…DPQEESQMVW (122 aa)) is phosphoribosyl-AMP cyclohydrolase. Residues 123 to 211 (LHQLEQLLAA…VINKLKERHK (89 aa)) form a phosphoribosyl-ATP pyrophosphohydrolase region.

The protein in the N-terminal section; belongs to the PRA-CH family. This sequence in the C-terminal section; belongs to the PRA-PH family.

It is found in the cytoplasm. It carries out the reaction 1-(5-phospho-beta-D-ribosyl)-ATP + H2O = 1-(5-phospho-beta-D-ribosyl)-5'-AMP + diphosphate + H(+). The enzyme catalyses 1-(5-phospho-beta-D-ribosyl)-5'-AMP + H2O = 1-(5-phospho-beta-D-ribosyl)-5-[(5-phospho-beta-D-ribosylamino)methylideneamino]imidazole-4-carboxamide. The protein operates within amino-acid biosynthesis; L-histidine biosynthesis; L-histidine from 5-phospho-alpha-D-ribose 1-diphosphate: step 2/9. Its pathway is amino-acid biosynthesis; L-histidine biosynthesis; L-histidine from 5-phospho-alpha-D-ribose 1-diphosphate: step 3/9. This chain is Histidine biosynthesis bifunctional protein HisIE, found in Vibrio vulnificus (strain YJ016).